We begin with the raw amino-acid sequence, 548 residues long: MAAPTLTADGPRLGQQEMKKMSPSFHPTLWGDFFLSYEAPTEAQEAQMREKAAVLKEEVRNMIKGSHDVPEIVDLIITLQRLNLDYHYEDEINEKLTVVYKSNYDGGNLDLVSRRFYLLRKCGYDVSSDVFLKFKDQLGNFVEADTRSLLSLYNAAFLRIHGETVLDEAISFTMRVLQDRLEHLESPLAEEVSSALDTPLFRRVGTLEMKDYIPIYEKDAKQNKSILEFAKLNFNLLQLRYSSELKECTTWWKELRVESNLSFVRDRIVEVYFWMSGGCYDPQYSHSRIILTKIVAFITILDDTLDSHATSCESMQLAEAIERWDESAVSLLPEYMKDFYMYLLKTFSSFENELGPDKSYRVFYLKEAVKELVREYTKEIKWRDEDYVPKTLKEHLKVSLISIGGTLVLCSAFVGMGDVVTKKIMKWVMSDAELVKSFGIFVRLSNDIVSTKREQREKHCVSTVQCYMKQHEITMDEACEQIKELTEDSWKFMIEQGLALKEYPIIVPRTVLEFARTVDYMYKEADKYTVSHTIKDMLTSLYVKPVLM.

Mg(2+)-binding residues include D302 and D306. Substrate-binding residues include D302, D306, R443, and N446. Positions 302–306 (DDTLD) match the DDXXD motif motif. The Mg(2+) site is built by N446, S450, and E454.

It belongs to the terpene synthase family. As to quaternary structure, monomer. Mg(2+) serves as cofactor. It depends on Mn(2+) as a cofactor. As to expression, expressed in roots. Not detected in leaves, unless damaged by herbivory or infected by fungi.

The protein localises to the cytoplasm. The catalysed reaction is (S)-beta-bisabolene = (S)-beta-macrocarpene. It catalyses the reaction (2E,6E)-farnesyl diphosphate = (S)-beta-bisabolene + diphosphate. The enzyme catalyses (2E)-geranyl diphosphate = (4S)-limonene + diphosphate. It carries out the reaction (2E)-geranyl diphosphate = beta-myrcene + diphosphate. The catalysed reaction is (2E)-geranyl diphosphate = terpinolene + diphosphate. It catalyses the reaction (2E)-geranyl diphosphate + H2O = (S)-linalool + diphosphate. It functions in the pathway secondary metabolite biosynthesis; terpenoid biosynthesis. Functionally, involved in the biosynthesis of the bicyclic sesquiterpene (S)-beta-macrocarpene. Can use both geranyl diphosphate and farnesyl diphosphate as substrate, but not geranylgeranyl diphosphate. Produces mainly (S)-beta-macrocarpene, but also smaller amounts of beta-bisabolene and (E)-beta-farnesene when used with farnesyl diphosphate as substrate. In the presence of geranyl diphosphate, produces the acyclic monoterpenes beta-myrcene and linalool along with minor amounts of the cyclic compounds limonene, alpha-thujene, sabinene and alpha-terpinolene. May be involved in plant defense. The polypeptide is (S)-beta-macrocarpene synthase (Zea mays (Maize)).